The following is a 394-amino-acid chain: Elongation factor Tu (394 aa).

In terms of domain architecture, tr-type G spans 10-204 (KPHVNVGTIG…ALDNYIPEPE (195 aa)). Positions 19-26 (GHVDHGKT) are G1. 19–26 (GHVDHGKT) lines the GTP pocket. A Mg(2+)-binding site is contributed by T26. A G2 region spans residues 60-64 (GITIS). Residues 81 to 84 (DCPG) are G3. GTP is bound by residues 81–85 (DCPGH) and 136–139 (NKCD). Residues 136-139 (NKCD) form a G4 region. Positions 174 to 176 (SAL) are G5.

This sequence belongs to the TRAFAC class translation factor GTPase superfamily. Classic translation factor GTPase family. EF-Tu/EF-1A subfamily. As to quaternary structure, monomer.

It localises to the cytoplasm. It catalyses the reaction GTP + H2O = GDP + phosphate + H(+). Functionally, GTP hydrolase that promotes the GTP-dependent binding of aminoacyl-tRNA to the A-site of ribosomes during protein biosynthesis. This Idiomarina loihiensis (strain ATCC BAA-735 / DSM 15497 / L2-TR) protein is Elongation factor Tu.